The following is a 198-amino-acid chain: Succinate dehydrogenase [ubiquinone] cytochrome b subunit, mitochondrial (198 aa).

The N-terminal 50 residues, Met-1–Lys-50, are a transit peptide targeting the mitochondrion. At Asn-51–Ser-99 the chain is on the mitochondrial matrix side. A ubiquinone contacts are provided by Ser-93 and Arg-97. Residues Leu-100–Leu-120 form a helical membrane-spanning segment. Over Gly-121–Lys-139 the chain is Mitochondrial intermembrane. The chain crosses the membrane as a helical span at residues Ile-140–Ala-160. Residue His-156 coordinates heme. At Ile-161–Lys-175 the chain is on the mitochondrial matrix side. A helical transmembrane segment spans residues Gly-176–Leu-196. The Mitochondrial intermembrane segment spans residues Thr-197–Leu-198.

Belongs to the cytochrome b560 family. In terms of assembly, forms part of complex II containing four subunits: a flavoprotein (FP), an iron-sulfur protein (IP) and a cytochrome b composed of two integral membrane proteins. Requires heme as cofactor.

It localises to the mitochondrion inner membrane. The protein operates within carbohydrate metabolism; tricarboxylic acid cycle. Its function is as follows. Membrane-anchoring mono-heme cytochrome b subunit of succinate dehydrogenase (SDH) that is involved in system II of the mitochondrial electron transport chain and is responsible for transferring electrons from succinate to ubiquinone (coenzyme Q). SDH3 and SDH4 form the membrane dimer that anchors the catalytic dimer formed by SDH1 and SDH2 to the matrix surface of the mitochondrial inner membrane. Electrons originating from the catalytic dimer enter the membrane dimer for ubiquinone reduction. The protein is Succinate dehydrogenase [ubiquinone] cytochrome b subunit, mitochondrial (SDH3) of Saccharomyces cerevisiae (strain ATCC 204508 / S288c) (Baker's yeast).